A 504-amino-acid chain; its full sequence is ATP synthase subunit alpha 2 (504 aa).

169–176 (GDRQTGKT) contributes to the ATP binding site.

The protein belongs to the ATPase alpha/beta chains family. In terms of assembly, F-type ATPases have 2 components, CF(1) - the catalytic core - and CF(0) - the membrane proton channel. CF(1) has five subunits: alpha(3), beta(3), gamma(1), delta(1), epsilon(1). CF(0) has three main subunits: a(1), b(2) and c(9-12). The alpha and beta chains form an alternating ring which encloses part of the gamma chain. CF(1) is attached to CF(0) by a central stalk formed by the gamma and epsilon chains, while a peripheral stalk is formed by the delta and b chains.

The protein resides in the cell membrane. It catalyses the reaction ATP + H2O + 4 H(+)(in) = ADP + phosphate + 5 H(+)(out). Produces ATP from ADP in the presence of a proton gradient across the membrane. The alpha chain is a regulatory subunit. The polypeptide is ATP synthase subunit alpha 2 (Listeria monocytogenes serovar 1/2a (strain ATCC BAA-679 / EGD-e)).